A 547-amino-acid chain; its full sequence is Probable protein kinase UbiB (547 aa).

In terms of domain architecture, Protein kinase spans 121–501 (EFSPDPMASA…QLRSERRWRR (381 aa)). ATP contacts are provided by residues 127 to 135 (MASASVAQV) and lysine 149. Aspartate 284 serves as the catalytic Proton acceptor. The next 2 membrane-spanning stretches (helical) occupy residues 502–522 (GFIA…HAGQ) and 523–543 (WLAD…GVML).

It belongs to the ABC1 family. UbiB subfamily.

It is found in the cell inner membrane. The protein operates within cofactor biosynthesis; ubiquinone biosynthesis [regulation]. Functionally, is probably a protein kinase regulator of UbiI activity which is involved in aerobic coenzyme Q (ubiquinone) biosynthesis. The sequence is that of Probable protein kinase UbiB from Marinobacter nauticus (strain ATCC 700491 / DSM 11845 / VT8) (Marinobacter aquaeolei).